A 513-amino-acid chain; its full sequence is 2-isopropylmalate synthase (513 aa).

The region spanning 5–268 (LIIFDTTLRD…DVGVDTSQIV (264 aa)) is the Pyruvate carboxyltransferase domain. Residues aspartate 14, histidine 202, histidine 204, and asparagine 239 each coordinate Mn(2+). Residues 394–513 (RFISLSQRSE…KAVQKINPQI (120 aa)) are regulatory domain.

The protein belongs to the alpha-IPM synthase/homocitrate synthase family. LeuA type 1 subfamily. Homodimer. Requires Mn(2+) as cofactor.

The protein localises to the cytoplasm. It carries out the reaction 3-methyl-2-oxobutanoate + acetyl-CoA + H2O = (2S)-2-isopropylmalate + CoA + H(+). It functions in the pathway amino-acid biosynthesis; L-leucine biosynthesis; L-leucine from 3-methyl-2-oxobutanoate: step 1/4. In terms of biological role, catalyzes the condensation of the acetyl group of acetyl-CoA with 3-methyl-2-oxobutanoate (2-ketoisovalerate) to form 3-carboxy-3-hydroxy-4-methylpentanoate (2-isopropylmalate). This chain is 2-isopropylmalate synthase, found in Cupriavidus pinatubonensis (strain JMP 134 / LMG 1197) (Cupriavidus necator (strain JMP 134)).